Consider the following 118-residue polypeptide: MRLLFLVLLVLLGLIQYPLWLGKGGWFKVWDLQRQVAEQRETNDGLRARNTALEAEVRDLATGVGAVEERARSELGMMREGEVFVHILPPGTPLPSGNSTPQASALSKPRPPATPPRR.

Residues 1 to 3 (MRL) are Cytoplasmic-facing. Residues 4–21 (LFLVLLVLLGLIQYPLWL) traverse the membrane as a helical segment. At 22 to 118 (GKGGWFKVWD…PRPPATPPRR (97 aa)) the chain is on the periplasmic side. The stretch at 28 to 62 (KVWDLQRQVAEQRETNDGLRARNTALEAEVRDLAT) forms a coiled coil. A disordered region spans residues 88–118 (LPPGTPLPSGNSTPQASALSKPRPPATPPRR). Residues 95–105 (PSGNSTPQASA) show a composition bias toward polar residues. Pro residues predominate over residues 109 to 118 (PRPPATPPRR).

The protein belongs to the FtsB family. In terms of assembly, part of a complex composed of FtsB, FtsL and FtsQ.

It is found in the cell inner membrane. In terms of biological role, essential cell division protein. May link together the upstream cell division proteins, which are predominantly cytoplasmic, with the downstream cell division proteins, which are predominantly periplasmic. The protein is Cell division protein FtsB of Bordetella parapertussis (strain 12822 / ATCC BAA-587 / NCTC 13253).